We begin with the raw amino-acid sequence, 502 residues long: MRNTLRVIIFVLAVAAFLFLTNDYWEGKLLGGLSILISCSVVFIAFVISLENRKPAHTITWLVVLGSFPLIGFFFYLMFGRNYRKQRLFQKKAMLDEQTFLKFQGQREWAIEQMPIGEHQRPLLQLAHRIGKSPVSLATETRVLTNGEETFSTIFEELEKATHHIHLEYYIVRHDEVGQKLKTILIEKAKKGVHVRFLYDAVGSWKLSKTYIQELRDAGVEMIPFSPVRLPFLSNTINFRNHRKIIVIDGTIGFVGGLNIGDEYLGKDKYFGFWRDTHLWIRGEAVRTLQLIFLQDWYYMTGKTLLTPEYLSPELVHYDGQGGVQLIAGGPDQKWEVIKHLYFAMITSAQRSIWIASPYFVPDEDILTALKIAALSGLDVRILAPKRPDKKIVFYASRSYFPELLEAGVKIYEYSKGFLHSKIMIVDGELASIGTANMDMRSFHLNFEVNAFLYHTDSTKKLVADFLEDLKEASPIDYETFQQRPLSIRVVESVSRLLSPLL.

Transmembrane regions (helical) follow at residues 7-27 (VIIF…YWEG), 29-49 (LLGG…FVIS), and 59-79 (ITWL…YLMF). 2 PLD phosphodiesterase domains span residues 237–264 (INFR…GDEY) and 415–442 (SKGF…DMRS). Active-site residues include histidine 242, lysine 244, aspartate 249, histidine 420, lysine 422, and aspartate 427.

The protein belongs to the phospholipase D family. Cardiolipin synthase subfamily.

Its subcellular location is the cell membrane. The catalysed reaction is 2 a 1,2-diacyl-sn-glycero-3-phospho-(1'-sn-glycerol) = a cardiolipin + glycerol. In terms of biological role, catalyzes the reversible phosphatidyl group transfer from one phosphatidylglycerol molecule to another to form cardiolipin (CL) (diphosphatidylglycerol) and glycerol. The sequence is that of Cardiolipin synthase (cls) from Geobacillus sp. (strain WCH70).